Reading from the N-terminus, the 227-residue chain is Cytochrome c oxidase subunit 2 (227 aa).

Over 1-14 the chain is Mitochondrial intermembrane; that stretch reads MAYPFQLGLQDATS. The chain crosses the membrane as a helical span at residues 15 to 45; sequence PIMEELTSFHDHTLMIVFLISSLVLYIILLM. Residues 46–59 are Mitochondrial matrix-facing; sequence LTTKLTHTSTMDAQ. The helical transmembrane segment at 60 to 87 threads the bilayer; the sequence is EVETIWTILPAVILILIALPSLRILYMM. Residues 88 to 227 are Mitochondrial intermembrane-facing; that stretch reads DEINNPALTV…HFENWSASMI (140 aa). Cu cation contacts are provided by His-161, Cys-196, Glu-198, Cys-200, His-204, and Met-207. A Mg(2+)-binding site is contributed by Glu-198.

It belongs to the cytochrome c oxidase subunit 2 family. Component of the cytochrome c oxidase (complex IV, CIV), a multisubunit enzyme composed of 14 subunits. The complex is composed of a catalytic core of 3 subunits MT-CO1, MT-CO2 and MT-CO3, encoded in the mitochondrial DNA, and 11 supernumerary subunits COX4I, COX5A, COX5B, COX6A, COX6B, COX6C, COX7A, COX7B, COX7C, COX8 and NDUFA4, which are encoded in the nuclear genome. The complex exists as a monomer or a dimer and forms supercomplexes (SCs) in the inner mitochondrial membrane with NADH-ubiquinone oxidoreductase (complex I, CI) and ubiquinol-cytochrome c oxidoreductase (cytochrome b-c1 complex, complex III, CIII), resulting in different assemblies (supercomplex SCI(1)III(2)IV(1) and megacomplex MCI(2)III(2)IV(2)). Found in a complex with TMEM177, COA6, COX18, COX20, SCO1 and SCO2. Interacts with TMEM177 in a COX20-dependent manner. Interacts with COX20. Interacts with COX16. Cu cation is required as a cofactor.

It localises to the mitochondrion inner membrane. The enzyme catalyses 4 Fe(II)-[cytochrome c] + O2 + 8 H(+)(in) = 4 Fe(III)-[cytochrome c] + 2 H2O + 4 H(+)(out). In terms of biological role, component of the cytochrome c oxidase, the last enzyme in the mitochondrial electron transport chain which drives oxidative phosphorylation. The respiratory chain contains 3 multisubunit complexes succinate dehydrogenase (complex II, CII), ubiquinol-cytochrome c oxidoreductase (cytochrome b-c1 complex, complex III, CIII) and cytochrome c oxidase (complex IV, CIV), that cooperate to transfer electrons derived from NADH and succinate to molecular oxygen, creating an electrochemical gradient over the inner membrane that drives transmembrane transport and the ATP synthase. Cytochrome c oxidase is the component of the respiratory chain that catalyzes the reduction of oxygen to water. Electrons originating from reduced cytochrome c in the intermembrane space (IMS) are transferred via the dinuclear copper A center (CU(A)) of subunit 2 and heme A of subunit 1 to the active site in subunit 1, a binuclear center (BNC) formed by heme A3 and copper B (CU(B)). The BNC reduces molecular oxygen to 2 water molecules using 4 electrons from cytochrome c in the IMS and 4 protons from the mitochondrial matrix. This chain is Cytochrome c oxidase subunit 2 (MT-CO2), found in Anisomys imitator (Uneven-toothed rat).